A 325-amino-acid polypeptide reads, in one-letter code: tRNA dimethylallyltransferase (325 aa).

16–23 contributes to the ATP binding site; sequence GPTASGKT. 18-23 serves as a coordination point for substrate; it reads TASGKT. Interaction with substrate tRNA regions lie at residues 41 to 44, 165 to 169, 253 to 258, and 286 to 293; these read DSAL, QRIQR, RCVGYR, and KRQITWLR.

This sequence belongs to the IPP transferase family. In terms of assembly, monomer. Mg(2+) is required as a cofactor.

It catalyses the reaction adenosine(37) in tRNA + dimethylallyl diphosphate = N(6)-dimethylallyladenosine(37) in tRNA + diphosphate. Catalyzes the transfer of a dimethylallyl group onto the adenine at position 37 in tRNAs that read codons beginning with uridine, leading to the formation of N6-(dimethylallyl)adenosine (i(6)A). The chain is tRNA dimethylallyltransferase from Ralstonia pickettii (strain 12J).